The sequence spans 481 residues: Aspartyl/glutamyl-tRNA(Asn/Gln) amidotransferase subunit B (481 aa).

The protein belongs to the GatB/GatE family. GatB subfamily. As to quaternary structure, heterotrimer of A, B and C subunits.

It carries out the reaction L-glutamyl-tRNA(Gln) + L-glutamine + ATP + H2O = L-glutaminyl-tRNA(Gln) + L-glutamate + ADP + phosphate + H(+). The catalysed reaction is L-aspartyl-tRNA(Asn) + L-glutamine + ATP + H2O = L-asparaginyl-tRNA(Asn) + L-glutamate + ADP + phosphate + 2 H(+). Its function is as follows. Allows the formation of correctly charged Asn-tRNA(Asn) or Gln-tRNA(Gln) through the transamidation of misacylated Asp-tRNA(Asn) or Glu-tRNA(Gln) in organisms which lack either or both of asparaginyl-tRNA or glutaminyl-tRNA synthetases. The reaction takes place in the presence of glutamine and ATP through an activated phospho-Asp-tRNA(Asn) or phospho-Glu-tRNA(Gln). The protein is Aspartyl/glutamyl-tRNA(Asn/Gln) amidotransferase subunit B of Pseudomonas savastanoi pv. phaseolicola (strain 1448A / Race 6) (Pseudomonas syringae pv. phaseolicola (strain 1448A / Race 6)).